A 463-amino-acid chain; its full sequence is Fibrinogen beta chain (463 aa).

Residues 1 to 12 (ASVEYDNEEDSP) show a composition bias toward acidic residues. The interval 1–56 (ASVEYDNEEDSPQIDARAHRPLDKRQEAAPTLRPVAPPISGTGYQPRPPKQDKQAM) is disordered. At tyrosine 5 the chain carries Sulfotyrosine. Over residues 16-27 (ARAHRPLDKRQE) the composition is skewed to basic and acidic residues. 2 cysteine pairs are disulfide-bonded: cysteine 205-cysteine 289 and cysteine 215-cysteine 244. Residues 206 to 461 (NIPVVSGREC…KMSMKIKPYF (256 aa)) form the Fibrinogen C-terminal domain. Asparagine 367 carries N-linked (GlcNAc...) asparagine glycosylation. 3 residues coordinate Ca(2+): aspartate 384, aspartate 386, and tryptophan 388. Cysteine 397 and cysteine 410 form a disulfide bridge.

In terms of assembly, heterohexamer; disulfide linked. Contains 2 sets of 3 non-identical chains (alpha, beta and gamma). The 2 heterotrimers are in head to head conformation with the N-termini in a small central domain. In terms of processing, conversion of fibrinogen to fibrin is triggered by thrombin, which cleaves fibrinopeptides A and B from alpha and beta chains, and thus exposes the N-terminal polymerization sites responsible for the formation of the soft clot. The soft clot is converted into the hard clot by factor XIIIA which catalyzes the epsilon-(gamma-glutamyl)lysine cross-linking between gamma chains (stronger) and between alpha chains (weaker) of different monomers.

The protein resides in the secreted. Cleaved by the protease thrombin to yield monomers which, together with fibrinogen alpha (FGA) and fibrinogen gamma (FGG), polymerize to form an insoluble fibrin matrix. Fibrin has a major function in hemostasis as one of the primary components of blood clots. The chain is Fibrinogen beta chain (FGB) from Gallus gallus (Chicken).